We begin with the raw amino-acid sequence, 186 residues long: Cell division protein SepF (186 aa).

2 disordered regions span residues 14-59 (EHDE…NETS) and 157-186 (GRSQ…RLAQ). Residues 16–27 (DEYEEDYDEEME) show a composition bias toward acidic residues. A compositionally biased stretch (low complexity) spans 159 to 171 (SQESNETSSSVSS).

Belongs to the SepF family. As to quaternary structure, homodimer. Interacts with FtsZ.

It localises to the cytoplasm. Its function is as follows. Cell division protein that is part of the divisome complex and is recruited early to the Z-ring. Probably stimulates Z-ring formation, perhaps through the cross-linking of FtsZ protofilaments. Its function overlaps with FtsA. The polypeptide is Cell division protein SepF (Synechocystis sp. (strain ATCC 27184 / PCC 6803 / Kazusa)).